Consider the following 340-residue polypeptide: Lipoate--protein ligase 2 (340 aa).

The 192-residue stretch at 31–222 (FLDEDILFPY…QILGIDDIKE (192 aa)) folds into the BPL/LPL catalytic domain. ATP is bound by residues Arg73, 78-81 (GAVY), Lys136, and Ala140. Lys136 is a binding site for (R)-lipoate. Positions 293–321 (QGDIKDVEEALQGTKMTREDLMHQLKQLD) form a coiled coil.

This sequence belongs to the LplA family.

The enzyme catalyses L-lysyl-[lipoyl-carrier protein] + (R)-lipoate + ATP = N(6)-[(R)-lipoyl]-L-lysyl-[lipoyl-carrier protein] + AMP + diphosphate + H(+). It functions in the pathway protein modification; protein lipoylation via exogenous pathway; protein N(6)-(lipoyl)lysine from lipoate: step 1/2. It participates in protein modification; protein lipoylation via exogenous pathway; protein N(6)-(lipoyl)lysine from lipoate: step 2/2. Catalyzes specifically the lipoylation of GcvH-L (SAV0324), likely via the ATP-dependent activation of lipoate to lipoyl-AMP and the transfer of the activated lipoyl onto the lipoyl domain of the target protein. Can also utilize lipoamide as substrate for GcvH-L modification. The polypeptide is Lipoate--protein ligase 2 (Staphylococcus aureus (strain Mu50 / ATCC 700699)).